The primary structure comprises 399 residues: Bifunctional enzyme IspD/IspF (399 aa).

The segment at 1 to 235 is 2-C-methyl-D-erythritol 4-phosphate cytidylyltransferase; sequence METWALILAA…MVEQPKTTVP (235 aa). Positions 236 to 399 are 2-C-methyl-D-erythritol 2,4-cyclodiphosphate synthase; it reads IVGYGYDVHK…IVIVTAIRIS (164 aa). Residues Asp-242 and His-244 each contribute to the a divalent metal cation site. Residues 242–244 and 275–276 contribute to the 4-CDP-2-C-methyl-D-erythritol 2-phosphate site; these read DVH and HS. A divalent metal cation is bound at residue His-283. Residues 297 to 299, 302 to 306, 373 to 376, and Phe-380 contribute to the 4-CDP-2-C-methyl-D-erythritol 2-phosphate site; these read DIG, FPDSD, and TTEE.

This sequence in the N-terminal section; belongs to the IspD/TarI cytidylyltransferase family. IspD subfamily. The protein in the C-terminal section; belongs to the IspF family. A divalent metal cation is required as a cofactor.

The catalysed reaction is 2-C-methyl-D-erythritol 4-phosphate + CTP + H(+) = 4-CDP-2-C-methyl-D-erythritol + diphosphate. It carries out the reaction 4-CDP-2-C-methyl-D-erythritol 2-phosphate = 2-C-methyl-D-erythritol 2,4-cyclic diphosphate + CMP. The protein operates within isoprenoid biosynthesis; isopentenyl diphosphate biosynthesis via DXP pathway; isopentenyl diphosphate from 1-deoxy-D-xylulose 5-phosphate: step 2/6. Its pathway is isoprenoid biosynthesis; isopentenyl diphosphate biosynthesis via DXP pathway; isopentenyl diphosphate from 1-deoxy-D-xylulose 5-phosphate: step 4/6. Its function is as follows. Bifunctional enzyme that catalyzes the formation of 4-diphosphocytidyl-2-C-methyl-D-erythritol from CTP and 2-C-methyl-D-erythritol 4-phosphate (MEP) (IspD), and catalyzes the conversion of 4-diphosphocytidyl-2-C-methyl-D-erythritol 2-phosphate (CDP-ME2P) to 2-C-methyl-D-erythritol 2,4-cyclodiphosphate (ME-CPP) with a corresponding release of cytidine 5-monophosphate (CMP) (IspF). The sequence is that of Bifunctional enzyme IspD/IspF from Lawsonia intracellularis (strain PHE/MN1-00).